A 156-amino-acid polypeptide reads, in one-letter code: Small ribosomal subunit protein uS7 (156 aa).

It belongs to the universal ribosomal protein uS7 family. As to quaternary structure, part of the 30S ribosomal subunit. Contacts proteins S9 and S11.

Functionally, one of the primary rRNA binding proteins, it binds directly to 16S rRNA where it nucleates assembly of the head domain of the 30S subunit. Is located at the subunit interface close to the decoding center, probably blocks exit of the E-site tRNA. This Microcystis aeruginosa (strain NIES-843 / IAM M-2473) protein is Small ribosomal subunit protein uS7.